A 151-amino-acid polypeptide reads, in one-letter code: Ribosome maturation factor RimP (151 aa).

It belongs to the RimP family.

Its subcellular location is the cytoplasm. Its function is as follows. Required for maturation of 30S ribosomal subunits. In Shewanella woodyi (strain ATCC 51908 / MS32), this protein is Ribosome maturation factor RimP.